Here is a 489-residue protein sequence, read N- to C-terminus: Ammonium transporter MEP3 (489 aa).

Topologically, residues 1–17 (MARGDGHLWTETYDSST) are extracellular. The chain crosses the membrane as a helical span at residues 18 to 38 (VAFMILGAALVFFMVPGLGFL). The Cytoplasmic segment spans residues 39 to 48 (YSGLARRKSA). Residues 49–69 (LALIWVVIMATLVGILQWYFW) form a helical membrane-spanning segment. Residues 70–108 (GYSLAFSKTATNNKFIGNLDSFGFRNVYGKISDDSTYPE) are Extracellular-facing. A helical membrane pass occupies residues 109–129 (LIYAIFQMMFMCVALSIIAGA). Over 130–139 (TAERGKLFPH) the chain is Cytoplasmic. Residues 140–160 (MVFLFVFATLVYCPITYWIWA) form a helical membrane-spanning segment. Over 161–173 (PGGWAYQWGVLDW) the chain is Extracellular. A helical membrane pass occupies residues 174-194 (AGGGNIEILSAVAGFVYSYFL). At 195 to 209 (GRRKENLLINFRPHN) the chain is on the cytoplasmic side. The helical transmembrane segment at 210–230 (VSMVTLGTSILWFGWLLFNAA) threads the bilayer. Topologically, residues 231 to 239 (SSLSPNMRS) are extracellular. The helical transmembrane segment at 240–260 (VYAFMNTCLSATTGGMTWCLL) threads the bilayer. At 261-267 (DYRSEKK) the chain is on the cytoplasmic side. Residues 268–288 (WSTVGLCSGIICGLVAATPSS) form a helical membrane-spanning segment. Position 289 (Gly-289) is a topological domain, extracellular. The helical transmembrane segment at 290-310 (CITLYGSLIQGIIAGVVCNFA) threads the bilayer. Topologically, residues 311-330 (TKIKYYLKVDDSLDLLAEHG) are cytoplasmic. Residues 331-351 (IAGVVGLIFNALFAADWVIGM) traverse the membrane as a helical segment. Residues 352-372 (DGTTKHKGGWLTHNWKQMYIQ) lie on the Extracellular side of the membrane. Residues 373-393 (IAYIGASAGYCAVVTAIICFV) traverse the membrane as a helical segment. Topologically, residues 394–489 (LGKIPGVHLR…NPKLHHAKEA (96 aa)) are cytoplasmic. Over residues 448–481 (GANSASETNPTEDSQNSSLSSATVSGQNEKSNNP) the composition is skewed to polar residues. Positions 448–489 (GANSASETNPTEDSQNSSLSSATVSGQNEKSNNPKLHHAKEA) are disordered.

The protein belongs to the ammonia transporter channel (TC 1.A.11.2) family.

Its subcellular location is the membrane. Transporter for ammonium (both charged and uncharged NH3 and NH4) to use as a nitrogen source. The affinity of MEP2 is about twenty times higher than that of MEP1. MEP3 has the lowest affinity. This chain is Ammonium transporter MEP3 (MEP3), found in Saccharomyces cerevisiae (strain ATCC 204508 / S288c) (Baker's yeast).